Here is a 67-residue protein sequence, read N- to C-terminus: uncharacterized protein (67 aa).

Residues 26-46 form a helical membrane-spanning segment; that stretch reads CYLLFCFLECFLNLFKKCGVF.

The protein belongs to the plectrovirus ORF11 family.

Its subcellular location is the host membrane. This is an uncharacterized protein from Spiroplasma virus SpV1-C74 (SpV1).